The chain runs to 518 residues: 2-isopropylmalate synthase (518 aa).

The Pyruvate carboxyltransferase domain maps to 5–269 (IIVLDTTLRD…STNVRLKELI (265 aa)). Mn(2+)-binding residues include D14, H204, H206, and N240. Positions 397–518 (ELDSFQVVTN…HDSQAPVSAR (122 aa)) are regulatory domain.

Belongs to the alpha-IPM synthase/homocitrate synthase family. LeuA type 1 subfamily. In terms of assembly, homodimer. Requires Mn(2+) as cofactor.

Its subcellular location is the cytoplasm. The catalysed reaction is 3-methyl-2-oxobutanoate + acetyl-CoA + H2O = (2S)-2-isopropylmalate + CoA + H(+). It participates in amino-acid biosynthesis; L-leucine biosynthesis; L-leucine from 3-methyl-2-oxobutanoate: step 1/4. In terms of biological role, catalyzes the condensation of the acetyl group of acetyl-CoA with 3-methyl-2-oxobutanoate (2-ketoisovalerate) to form 3-carboxy-3-hydroxy-4-methylpentanoate (2-isopropylmalate). The sequence is that of 2-isopropylmalate synthase from Geobacillus sp. (strain Y412MC10).